The sequence spans 868 residues: Coatomer subunit gamma (868 aa).

A compositionally biased stretch (basic residues) spans 1 to 11 (MWRTKRGRTRR). The segment at 1–22 (MWRTKRGRTRRRDAGGNPWQNL) is disordered. HEAT repeat units lie at residues 64–101 (REATECFFAMTKLFQSKDVVMRRMVYLGIKELSPIADD), 287–324 (RELSTAVSILQLFCGSSKATLRFAAVRTMNKVAMLHPP), 326–359 (VNVCNLDLEGLIADSNRSVATLAITTLLKTGAES), and 360–396 (SVERLMKQIATFVAEISDEFKLVVVQAIRSLCTKFPR).

The protein belongs to the COPG family. As to quaternary structure, oligomeric complex that consists of at least the alpha, beta, beta', gamma, delta, epsilon and zeta subunits.

It localises to the cytoplasm. The protein localises to the golgi apparatus membrane. The protein resides in the cytoplasmic vesicle. It is found in the COPI-coated vesicle membrane. Its subcellular location is the endoplasmic reticulum. Functionally, the coatomer is a cytosolic protein complex that binds to dilysine motifs and reversibly associates with Golgi non-clathrin-coated vesicles, which further mediate biosynthetic protein transport from the ER, via the Golgi up to the trans Golgi network. Coatomer complex is required for budding from Golgi membranes, and is essential for the retrograde Golgi-to-ER transport of dilysine-tagged proteins. In Anopheles gambiae (African malaria mosquito), this protein is Coatomer subunit gamma.